The primary structure comprises 492 residues: MAETGSVHATRFEAAVKVIQSLPKNGSFQPTNEMMLKFYSFYKQATQGPCNIPRPGFWDPIGRYKWDAWSALGDMSKEEAMIAYVEEMKKILESMPMTDKVEELLQVIGPFYEIVEDKKNRGSGLTSDLSNVMNSTPNIKAVNGKAESSDSGAESEEEGLREEEEKELQQNVKDCKSPKTESLAAKDLENSVANDCYKDSFIPDMQNGIQTKSALNGLNVEEEIKKTEPSLEIANNCDHRGANEENTEEVSGTQHLTSDSDSEVYCDSMEQLGLEEPLEIITSAKGSLKRSSHFLDVDHRLQLENTDLPRHACTTAGNLQLGTAVDGAVQEKGEVKCGGEDGKASNGAPHKEKKDGEKADFYGVRRGRGHRLHPVGDGSQGGQMGNGGDGERWGSDRGPRGSLNEQIAVVLMRLQEDMQNVLQRLHMLEAVTASQARSATLQSNYQPASSVKKPSWWPFEISPGVLAFAIVWPFIAQWLVHVYLQRKRRKLN.

The ACB domain occupies 8–97 (HATRFEAAVK…MKKILESMPM (90 aa)). Residues 19–28 (IQSLPKNGSF), 39–43 (YSFYK), Lys-65, and Tyr-84 each bind an acyl-CoA. Disordered regions lie at residues 141 to 162 (AVNGKAESSDSGAESEEEGLRE) and 335 to 399 (VKCG…DRGP). Acidic residues predominate over residues 153–162 (AESEEEGLRE). Basic and acidic residues predominate over residues 335–360 (VKCGGEDGKASNGAPHKEKKDGEKAD). Over residues 378–388 (GSQGGQMGNGG) the composition is skewed to gly residues. Basic and acidic residues predominate over residues 389–399 (DGERWGSDRGP). Residues 405–431 (EQIAVVLMRLQEDMQNVLQRLHMLEAV) adopt a coiled-coil conformation. Residues 464–484 (GVLAFAIVWPFIAQWLVHVYL) form a helical membrane-spanning segment.

Belongs to the ATG37 family.

The protein resides in the peroxisome membrane. Acyl-CoA binding protein which acts as the peroxisome receptor for pexophagy but is dispensable for aggrephagy and nonselective autophagy. Binds medium- and long-chain acyl-CoA esters. This Gallus gallus (Chicken) protein is Acyl-CoA-binding domain-containing protein 5 (ACBD5).